A 268-amino-acid polypeptide reads, in one-letter code: Putative hydro-lyase ACICU_01268 (268 aa).

The protein belongs to the D-glutamate cyclase family.

The sequence is that of Putative hydro-lyase ACICU_01268 from Acinetobacter baumannii (strain ACICU).